Consider the following 3371-residue polypeptide: Abnormal spindle-like microcephaly-associated protein homolog (3371 aa).

5 positions are modified to phosphoserine: Ser212, Ser215, Ser300, Ser325, and Ser540. The tract at residues 536-559 is disordered; that stretch reads RPHFSPVESKTSTVKHTKKVVTSS. The Calponin-homology (CH) 1 domain occupies 852–988; sequence KASKEILLAF…LLWKIALAFQ (137 aa). Residues 989–1014 adopt a coiled-coil conformation; sequence VDISLNLDQLKEEIDFLKNTQSMKKT. A Phosphoserine modification is found at Ser1035. Residues 1042–1193 form the Calponin-homology (CH) 2 domain; the sequence is SESVKLLMDW…YLSFLCARLL (152 aa). IQ domains are found at residues 1198 to 1227, 1396 to 1427, 1469 to 1500, 1564 to 1593, 1587 to 1616, 1610 to 1639, 1644 to 1673, 1667 to 1698, 1717 to 1746, 1740 to 1769, 1790 to 1819, 1813 to 1844, 1863 to 1894, 1886 to 1917, 1936 to 1965, 1959 to 1990, 2009 to 2040, 2032 to 2063, 2082 to 2113, 2105 to 2134, 2155 to 2186, 2227 to 2258, 2250 to 2281, 2300 to 2331, 2323 to 2354, 2396 to 2427, 2446 to 2477, 2539 to 2570, 2580 to 2609, 2603 to 2634, 2653 to 2682, 2729 to 2760, 2751 to 2780, 2824 to 2853, 2847 to 2878, 2869 to 2900, 2944 to 2973, 2994 to 3025, 3096 to 3125, and 3119 to 3150; these read ETRA…RDKA, EERA…IIIQ, KRAA…VLQS, TRSA…SIVK, ILTS…ATVK, LKKA…IAQQ, RRAS…AAVS, QRKA…VVIQ, VRRA…AALK, QSAA…SALK, TRTA…AAVK, EHEA…SVIQ, LRRA…IIIQ, QQRC…HLIQ, TKXA…AAAT, MHQA…VIIQ, VKKA…TLIK, MHMA…IIIQ, ILKA…TLIQ, MRTA…VTKT, LRRS…AVIQ, LQKA…TVLQ, MRRA…QVIQ, QRHS…TLIQ, MHAS…VFVQ, MHRA…VLIQ, WRHS…VIIQ, RHQA…VFVQ, RTQA…AATR, MHLA…VVIQ, IQKS…KKMA, QRKA…RIQS, QRRA…AALT, IRSS…STIK, LKDS…RIQA, EVKA…RIIQ, RHQA…AALT, LKKS…RLLH, HSRA…RIAK, and FNKR…IRQR.

Its subcellular location is the cytoplasm. The protein resides in the cytoskeleton. It is found in the spindle. It localises to the nucleus. In terms of biological role, probable role in mitotic spindle regulation and coordination of mitotic processes. May have a preferential role in regulating neurogenesis. In Bos taurus (Bovine), this protein is Abnormal spindle-like microcephaly-associated protein homolog (ASPM).